A 101-amino-acid chain; its full sequence is Feather keratin Cos1-1/Cos1-3/Cos2-1 (101 aa).

The residue at position 2 (S2) is an N-acetylserine.

Belongs to the avian keratin family. In terms of assembly, the avian keratins (F-ker, S-ker, C-ker and B-ker) are a complex mixture of very similar polypeptides.

This is Feather keratin Cos1-1/Cos1-3/Cos2-1 from Columba livia (Rock dove).